Reading from the N-terminus, the 849-residue chain is Probable ubiquitin carboxyl-terminal hydrolase 1 (849 aa).

A DUSP domain is found at 20-120 (QPASLPFQDS…EGLAIERKVL (101 aa)). One can recognise a USP domain in the interval 279 to 848 (CGLYNLGNSC…SAYVLFYRAK (570 aa)). The active-site Nucleophile is the Cys-288. His-806 serves as the catalytic Proton acceptor.

It belongs to the peptidase C19 family.

It carries out the reaction Thiol-dependent hydrolysis of ester, thioester, amide, peptide and isopeptide bonds formed by the C-terminal Gly of ubiquitin (a 76-residue protein attached to proteins as an intracellular targeting signal).. This Schizosaccharomyces pombe (strain 972 / ATCC 24843) (Fission yeast) protein is Probable ubiquitin carboxyl-terminal hydrolase 1 (ubp1).